The chain runs to 361 residues: Phospho-N-acetylmuramoyl-pentapeptide-transferase (361 aa).

Helical transmembrane passes span 28-48, 74-94, 99-119, 133-153, 168-188, 203-223, 236-256, 263-283, 288-308, and 338-358; these read LAIIITLSLSFITGPILIKFL, TMGGIMIILSSCLSTLLLADL, TWITLFGFISFGIIGFMDDYA, SKLLLQGIISFIICVLLEYLD, LSLDLGYFYIVFAIFVIVGSS, VPIAFTAGSFALISYLVGNLI, TGELTVLCAGLVGSCLGFLWF, VFMGDTGSLSLGGVLGIISVI, IVLAIVGGLFVIETASVILQV, and KVVIRFWIISVIFALIGLSSL.

It belongs to the glycosyltransferase 4 family. MraY subfamily. Requires Mg(2+) as cofactor.

It is found in the cell inner membrane. It carries out the reaction UDP-N-acetyl-alpha-D-muramoyl-L-alanyl-gamma-D-glutamyl-meso-2,6-diaminopimeloyl-D-alanyl-D-alanine + di-trans,octa-cis-undecaprenyl phosphate = di-trans,octa-cis-undecaprenyl diphospho-N-acetyl-alpha-D-muramoyl-L-alanyl-D-glutamyl-meso-2,6-diaminopimeloyl-D-alanyl-D-alanine + UMP. It participates in cell wall biogenesis; peptidoglycan biosynthesis. In terms of biological role, catalyzes the initial step of the lipid cycle reactions in the biosynthesis of the cell wall peptidoglycan: transfers peptidoglycan precursor phospho-MurNAc-pentapeptide from UDP-MurNAc-pentapeptide onto the lipid carrier undecaprenyl phosphate, yielding undecaprenyl-pyrophosphoryl-MurNAc-pentapeptide, known as lipid I. The polypeptide is Phospho-N-acetylmuramoyl-pentapeptide-transferase (Rickettsia massiliae (strain Mtu5)).